Reading from the N-terminus, the 564-residue chain is Solute carrier family 22 member 21 (564 aa).

The Cytoplasmic segment spans residues 1 to 20; that stretch reads MLDYDEVTAFLGEWGTFQRL. The chain crosses the membrane as a helical span at residues 21-41; the sequence is IFFLLSASIIPNGFTGLSAVF. Residues 42–142 lie on the Extracellular side of the membrane; the sequence is LTAIPEHRCR…DLVCKDDWKA (101 aa). N-linked (GlcNAc...) asparagine glycosylation is found at Asn57, Asn64, and Asn91. The helical transmembrane segment at 143-163 threads the bilayer; sequence PLTTSFFYVGVLLGSFISGQL. Residues 164-172 are Cytoplasmic-facing; that stretch reads SDRFGRKNI. A helical membrane pass occupies residues 173 to 193; sequence LFLTMAMHTGFSFIQVFSVNF. Residues 194-197 lie on the Extracellular side of the membrane; the sequence is EMFT. The helical transmembrane segment at 198 to 218 threads the bilayer; it reads LLYTLVGMGHISNYVAAFVLG. An ATP-binding site is contributed by 218-225; that stretch reads GTEMLSKS. Topologically, residues 219–232 are cytoplasmic; it reads TEMLSKSVRIIFAT. A helical membrane pass occupies residues 233–253; sequence LGVCIFFAFGFMVLPLFAYFI. The Extracellular segment spans residues 254-257; sequence REWR. Residues 258-278 traverse the membrane as a helical segment; sequence RLLLAITLPGVLCGALWWFIP. Topologically, residues 279–344 are cytoplasmic; sequence ESPRWLISQG…YDLVRTPNIR (66 aa). The helical transmembrane segment at 345–365 threads the bilayer; it reads ILTIMSIILWLTISVGYFGLS. At 366–376 the chain is on the extracellular side; sequence LDTPNLNGNIY. The helical transmembrane segment at 377–397 threads the bilayer; that stretch reads VNCFLLAAVEVPAYVLAWLLL. Topologically, residues 398–409 are cytoplasmic; sequence QHVSRRYSMAGS. The chain crosses the membrane as a helical span at residues 410–430; that stretch reads LFLGGSVLLLVQLVPSDLHYL. The Extracellular segment spans residues 431–433; the sequence is STT. The helical transmembrane segment at 434–454 threads the bilayer; it reads LVMVGKFGITSAYSMVYVYTA. Over 455–465 the chain is Cytoplasmic; sequence ELYPTVVRNMG. Residues 466 to 486 traverse the membrane as a helical segment; that stretch reads VGVSSTASRLGSILSPYFVYL. The Extracellular portion of the chain corresponds to 487 to 491; sequence GAYDR. The helical transmembrane segment at 492–512 threads the bilayer; it reads RLPYILMGSLTILTAIITLFF. Residues 513–564 lie on the Cytoplasmic side of the membrane; sequence PESSGVSLPETIDEMQKVKKLKQRQSLSKKGSPKESKGNVSRTSRTSEPKGF. The tract at residues 532–564 is disordered; sequence KLKQRQSLSKKGSPKESKGNVSRTSRTSEPKGF.

It belongs to the major facilitator (TC 2.A.1) superfamily. Organic cation transporter (TC 2.A.1.19) family. In terms of tissue distribution, predominantly expressed in testis.

It is found in the peroxisome membrane. Sodium-ion independent, medium affinity carnitine transporter. Also transports organic cations such as tetraethylammonium (TEA) without the involvement of sodium. Relative uptake activity ratio of carnitine to TEA is 746. The protein is Solute carrier family 22 member 21 (Slc22a21) of Mus musculus (Mouse).